The following is a 204-amino-acid chain: Probable carboxysome shell protein CsoS1E (204 aa).

Composition is skewed to low complexity over residues 1 to 14, 41 to 84, and 92 to 102; these read MPKP…DSPS, SAST…AAGS, and GGAIKPPASSS. Residues 1 to 102 form a disordered region; sequence MPKPSSSSSS…GAIKPPASSS (102 aa). Residues 111 to 196 form the BMC domain; sequence ALGMIETRGM…PHQEVEPALR (86 aa).

It belongs to the bacterial microcompartments protein family. As to quaternary structure, homohexamer.

The protein localises to the carboxysome. Functionally, a probable carboxysomal shell protein found only in Prochlorococcus and Synechococcus strains that grow in low light. The chain is Probable carboxysome shell protein CsoS1E from Prochlorococcus marinus (strain MIT 9313).